A 165-amino-acid chain; its full sequence is UPF0303 protein Bxeno_A1932 (165 aa).

This sequence belongs to the UPF0303 family.

This is UPF0303 protein Bxeno_A1932 from Paraburkholderia xenovorans (strain LB400).